We begin with the raw amino-acid sequence, 113 residues long: Ferredoxin-1 (113 aa).

2 consecutive 4Fe-4S ferredoxin-type domains span residues 2-30 (TYIV…YEGE) and 31-60 (NFLV…PDTE). [3Fe-4S] cluster-binding residues include Cys9 and Cys17. Residues Cys21, Cys40, Cys43, and Cys46 each contribute to the [4Fe-4S] cluster site. [3Fe-4S] cluster is bound at residue Cys50.

[4Fe-4S] cluster serves as cofactor. It depends on [3Fe-4S] cluster as a cofactor.

This chain is Ferredoxin-1 (fdxA), found in Caulobacter vibrioides (strain ATCC 19089 / CIP 103742 / CB 15) (Caulobacter crescentus).